A 238-amino-acid polypeptide reads, in one-letter code: 7-cyano-7-deazaguanine synthase (238 aa).

12–22 (FSGGQDSGTCL) serves as a coordination point for ATP. Zn(2+)-binding residues include cysteine 200, cysteine 215, cysteine 218, and cysteine 221.

It belongs to the QueC family. It depends on Zn(2+) as a cofactor.

The catalysed reaction is 7-carboxy-7-deazaguanine + NH4(+) + ATP = 7-cyano-7-deazaguanine + ADP + phosphate + H2O + H(+). It participates in purine metabolism; 7-cyano-7-deazaguanine biosynthesis. Catalyzes the ATP-dependent conversion of 7-carboxy-7-deazaguanine (CDG) to 7-cyano-7-deazaguanine (preQ(0)). This is 7-cyano-7-deazaguanine synthase from Lawsonia intracellularis (strain PHE/MN1-00).